The primary structure comprises 478 residues: Crt homolog 3 (478 aa).

The disordered stretch occupies residues 1 to 30 (MGSDERKPLLSINDGDDDFNHQDVSTKTPP). At 1-52 (MGSDERKPLLSINDGDDDFNHQDVSTKTPPIKKESLSNKFKSFLKKSMTKET) the chain is on the cytoplasmic side. The chain crosses the membrane as a helical span at residues 53-73 (LPILIYVLLYIISGVINVVLL). Residues 74 to 83 (KKLMIKFVNY) are Vacuolar-facing. Residues 84-104 (GFFLSQITNYGYLPIFLVAMW) traverse the membrane as a helical segment. Residues 105–124 (YKMYCTSDVPKETRNFPQYK) are Cytoplasmic-facing. The chain crosses the membrane as a helical span at residues 125–145 (FVIMGLLDAINGFFVVIGGVS). The Vacuolar portion of the chain corresponds to 146–149 (TSGP). Residues 150–170 (LQQLLNQAIIPFTMIASFIFL) form a helical membrane-spanning segment. Residues 171-178 (RERYSLFQ) lie on the Cytoplasmic side of the membrane. A helical membrane pass occupies residues 179-199 (LGGAAVILGGVIVSLIPSLVG). Residues 200–205 (GSSGGN) lie on the Vacuolar side of the membrane. The chain crosses the membrane as a helical span at residues 206–226 (ILFYNFFYLISVIPGALSNVY). Residues 227–237 (KDIAFQSIDMD) are Cytoplasmic-facing. The helical transmembrane segment at 238–258 (VWYLQFWDCLYQSLFGSILFP) threads the bilayer. The Vacuolar segment spans residues 259–322 (VNNWLPPPAT…FVCDDCHNTW (64 aa)). Residue N296 is glycosylated (N-linked (GlcNAc...) asparagine). Residues 323–343 (IIVLIYMTVNIAYNIFILLVL) form a helical membrane-spanning segment. At 344–352 (KHAGATVYS) the chain is on the cytoplasmic side. Residues 353–373 (IANTVILPLTNIFFSIHFIMG) traverse the membrane as a helical segment. The Vacuolar portion of the chain corresponds to 374–376 (AAT). A helical membrane pass occupies residues 377 to 397 (TPFSALSVAGLLLILFGLGGY). Over 398–478 (RIGSMIKKPP…RYRATNIINN (81 aa)) the chain is Cytoplasmic. Residues 404–446 (KKPPPDSKKDSEQQGGEGGAGDGDSSDNKNNLGDSAEIPQQIQ) are disordered. The segment covering 406-415 (PPPDSKKDSE) has biased composition (basic and acidic residues).

Belongs to the CRT-like transporter family.

The protein localises to the vacuole membrane. Nutrient transporter. Involved in maintaining the osmotic homeostasis of the digestive vacuole. The polypeptide is Crt homolog 3 (crtp3) (Dictyostelium discoideum (Social amoeba)).